The primary structure comprises 125 residues: MRWQGSSRRKVTGGKVINARGKRKFEMGRESAETRISEIKRKNVHTMGGNRKVRLLQCDVANITNPKDGKTTSAPIETVLDNIANKHYIRRNILTKGSVIRTPLGTAKVTSRPGQDGVVNAVLIE.

It belongs to the eukaryotic ribosomal protein eS8 family. Part of the 30S ribosomal subunit.

This chain is Small ribosomal subunit protein eS8, found in Methanosarcina barkeri (strain Fusaro / DSM 804).